Here is a 337-residue protein sequence, read N- to C-terminus: MASEVLLELQPSNRSLQAPANITSCESALEDWDLLYRVLPGFVITICFFGLLGNLLVLSFFLLPWRQWWWQQRQRQQRLTIAEIYLANLAASDLVFVLGLPFWAENIGNRFNWPFGTDLCRVVSGVIKANLFVSIFLVVAISQDRYRLLVYPMTSWGYRRRRQAQATCLLIWVAGGLLSIPTFLLRSVKVVPDLNVSACILLFPHEAWHFARMVELNVLGFLLPVTAIIFFNYHILASLRGQKEASRTRCGGPKGSKTTGLILTLVASFLVCWCPYHFFAFLDFLVQVRVIQDCSWKEITDLGLQLANFFAFVNSCLNPLIYVFAGRLLKTRVLGTL.

Residues M1–G41 lie on the Extracellular side of the membrane. 2 N-linked (GlcNAc...) asparagine glycosylation sites follow: N13 and N21. A helical transmembrane segment spans residues F42–L62. The Cytoplasmic segment spans residues L63–E83. The chain crosses the membrane as a helical span at residues I84 to A104. Over E105–R121 the chain is Extracellular. C120 and C199 form a disulfide bridge. Residues V122 to S142 traverse the membrane as a helical segment. Residues Q143–A164 lie on the Cytoplasmic side of the membrane. The helical transmembrane segment at Q165–L185 threads the bilayer. Topologically, residues R186–N217 are extracellular. A glycan (N-linked (GlcNAc...) asparagine) is linked at N195. Residues V218–S238 traverse the membrane as a helical segment. The Cytoplasmic portion of the chain corresponds to L239–L261. The chain crosses the membrane as a helical span at residues I262–L282. At D283–Q305 the chain is on the extracellular side. Residues L306–G326 traverse the membrane as a helical segment. The Cytoplasmic segment spans residues R327–L337.

Belongs to the G-protein coupled receptor 1 family. Bradykinin receptor subfamily. BDKRB1 sub-subfamily. As to expression, expressed in bladder, lung, duodenum, kidney, uterus, thymus, salivary gland, testis, prostate, macrophages, aorta, spleen and heart.

Its subcellular location is the cell membrane. Functionally, this is a receptor for bradykinin. Could be a factor in chronic pain and inflammation. In Rattus norvegicus (Rat), this protein is B1 bradykinin receptor (Bdkrb1).